The primary structure comprises 244 residues: 5-oxoprolinase subunit A (244 aa).

Belongs to the LamB/PxpA family. Forms a complex composed of PxpA, PxpB and PxpC.

The enzyme catalyses 5-oxo-L-proline + ATP + 2 H2O = L-glutamate + ADP + phosphate + H(+). In terms of biological role, catalyzes the cleavage of 5-oxoproline to form L-glutamate coupled to the hydrolysis of ATP to ADP and inorganic phosphate. In Escherichia coli (strain K12), this protein is 5-oxoprolinase subunit A.